The following is a 272-amino-acid chain: Putative G-protein coupled receptor GPR32P1 (272 aa).

The disordered stretch occupies residues 1–24; sequence MNGVSEGTRGCSDRQPGALTQGHS. Over 1–46 the chain is Extracellular; that stretch reads MNGVSEGTRGCSDRQPGALTQGHSCSRKMNASRCLSEEVGSLRPLT. Residue Asn-30 is glycosylated (N-linked (GlcNAc...) asparagine). The helical transmembrane segment at 47-67 threads the bilayer; sequence MAVLSASFVVGVLGNGLVPWV. Residues 68–78 lie on the Cytoplasmic side of the membrane; it reads TVFRMARTVST. The helical transmembrane segment at 79-99 threads the bilayer; it reads VCFFHLALADFMLSLSLPILV. Residues 100–116 are Extracellular-facing; sequence YYIVSRQWLLGEWACKL. Cysteines 114 and 191 form a disulfide. The helical transmembrane segment at 117-137 threads the bilayer; the sequence is YTGFVFLTFSTSNCLLVLISV. The Cytoplasmic portion of the chain corresponds to 138-158; that stretch reads DRCISVLYPVWALNHRTEQRA. A helical transmembrane segment spans residues 159–179; sequence SWLAFGVWLLAAALCSAHLKF. Over 180–213 the chain is Extracellular; sequence RTTRKWNGCMQCYLQFNLENETAQMWTQEVFGRQ. Asn-199 is a glycosylation site (N-linked (GlcNAc...) asparagine). A helical transmembrane segment spans residues 214-234; it reads MAVIMAHFLLGFLGPLAIIGT. The Cytoplasmic portion of the chain corresponds to 235–272; it reads CAHLIRAKLLREGWVHANRPKRLLLVLVSALSAGSHLT.

This sequence belongs to the G-protein coupled receptor 1 family.

It localises to the cell membrane. Orphan receptor. The chain is Putative G-protein coupled receptor GPR32P1 (GPR32P1) from Homo sapiens (Human).